Reading from the N-terminus, the 90-residue chain is Phenol 2-monooxygenase, stimulatory component DmpM (90 aa).

The protein belongs to the TmoD/XamoD family. Active as a monomer. Formation of dimers inactivates the protein. The multicomponent enzyme phenol hydroxylase is formed by DmpL (P1 component), DmpM (P2 component), DmpN (P3 component), DmpO (P4 component) and DmpP (P5 component).

The enzyme catalyses phenol + NADH + O2 + H(+) = catechol + NAD(+) + H2O. It functions in the pathway aromatic compound metabolism; phenol degradation. Its function is as follows. Part of a multicomponent enzyme which catalyzes the degradation of phenol and some of its methylated derivatives. DmpM is a regulatory subunit that stimulates the phenol hydroxylase activity of the complex. The steady-state rate of phenol hydroxylase turnover is dependent on the DmpM concentration, with a maximum observed rate at about 1.5 DmpM per oxygenase monomer. Higher concentrations of DmpM inhibit phenol hydroxylase activity. May act by altering the redox potential of the oxygenase. Required for growth on phenol and for in vitro phenol hydroxylase activity. In Pseudomonas sp. (strain CF600), this protein is Phenol 2-monooxygenase, stimulatory component DmpM.